The primary structure comprises 70 residues: Venom antimicrobial peptide-6 (70 aa).

The N-terminal stretch at 1 to 23 (MKSQTFFLLFLVVFLLAITQSEA) is a signal peptide. A Phenylalanine amide modification is found at Phe-36. Positions 40–70 (SLRDMDTMKYLYDPSLSAADLKTLQKLMENY) are excised as a propeptide.

It belongs to the non-disulfide-bridged peptide (NDBP) superfamily. Short antimicrobial peptide (group 4) family. Expressed by the venom gland.

The protein resides in the secreted. It localises to the target cell membrane. In terms of biological role, amphipathic peptide that exhibits extensive cytolytic activities against both prokaryotic and eukaryotic cells. Is more potent against Gram-positive bacteria (lethal concentration (LC)=0.25-2.9 uM) than against Gram-negative bacteria (LC=6.2-&gt;50 uM), and fungi ((LC)=14.1-&gt;50 uM). Shows hemolytic activity against rabbit erythrocytes (37.7% of inhibition at 6.25 uM) and cytolysis against rat dorsal root ganglions. In vivo, intravenous injection into mice tail provokes uncomfortable symptoms with a death rate of 12.5%. The protein is Venom antimicrobial peptide-6 of Mesobuthus eupeus (Lesser Asian scorpion).